A 179-amino-acid chain; its full sequence is Inorganic pyrophosphatase (179 aa).

3 residues coordinate substrate: Lys-30, Arg-44, and Tyr-56. Mg(2+) is bound by residues Asp-66, Asp-71, and Asp-103. Substrate is bound at residue Tyr-143.

The protein belongs to the PPase family. In terms of assembly, homohexamer. Mg(2+) serves as cofactor.

Its subcellular location is the cytoplasm. The enzyme catalyses diphosphate + H2O = 2 phosphate + H(+). Its function is as follows. Catalyzes the hydrolysis of inorganic pyrophosphate (PPi) forming two phosphate ions. This chain is Inorganic pyrophosphatase, found in Wigglesworthia glossinidia brevipalpis.